The sequence spans 391 residues: Na(+)/H(+) antiporter NhaA 2 (391 aa).

The next 11 membrane-spanning stretches (helical) occupy residues 25–45, 56–76, 98–118, 128–148, 157–177, 180–200, 208–228, 264–284, 297–317, 335–355, and 364–384; these read AGGI…NSPL, VWLG…IFFL, ALPG…YIAI, GWAI…SLLG, VFLA…IAFF, SGLN…LVAL, LLPY…SGVH, VAFA…LSGI, VALG…VLAI, GVAI…NLAF, and EVKV…IVLL.

This sequence belongs to the NhaA Na(+)/H(+) (TC 2.A.33) antiporter family.

It localises to the cell inner membrane. It carries out the reaction Na(+)(in) + 2 H(+)(out) = Na(+)(out) + 2 H(+)(in). Its function is as follows. Na(+)/H(+) antiporter that extrudes sodium in exchange for external protons. This Pseudomonas syringae pv. tomato (strain ATCC BAA-871 / DC3000) protein is Na(+)/H(+) antiporter NhaA 2.